We begin with the raw amino-acid sequence, 376 residues long: Beta sliding clamp (376 aa).

This sequence belongs to the beta sliding clamp family. In terms of assembly, forms a ring-shaped head-to-tail homodimer around DNA which binds and tethers DNA polymerases and other proteins to the DNA. The DNA replisome complex has a single clamp-loading complex (3 tau and 1 each of delta, delta', psi and chi subunits) which binds 3 Pol III cores (1 core on the leading strand and 2 on the lagging strand) each with a beta sliding clamp dimer. Additional proteins in the replisome are other copies of gamma, psi and chi, Ssb, DNA helicase and RNA primase.

Its subcellular location is the cytoplasm. In terms of biological role, confers DNA tethering and processivity to DNA polymerases and other proteins. Acts as a clamp, forming a ring around DNA (a reaction catalyzed by the clamp-loading complex) which diffuses in an ATP-independent manner freely and bidirectionally along dsDNA. Initially characterized for its ability to contact the catalytic subunit of DNA polymerase III (Pol III), a complex, multichain enzyme responsible for most of the replicative synthesis in bacteria; Pol III exhibits 3'-5' exonuclease proofreading activity. The beta chain is required for initiation of replication as well as for processivity of DNA replication. The polypeptide is Beta sliding clamp (dnaN) (Streptomyces coelicolor (strain ATCC BAA-471 / A3(2) / M145)).